We begin with the raw amino-acid sequence, 216 residues long: Cell envelope integrity protein Cei (216 aa).

Residues 25-45 (PAIVVVAFLVVVTCVMWTLAL) form a helical membrane-spanning segment.

The protein localises to the cell membrane. Functionally, contributes to cell envelope integrity and virulence. This Mycobacterium tuberculosis (strain ATCC 25618 / H37Rv) protein is Cell envelope integrity protein Cei.